The chain runs to 689 residues: Elongation factor G (689 aa).

The region spanning 8–283 (SKCRNIGIMA…AVVDFLPAPN (276 aa)) is the tr-type G domain. GTP contacts are provided by residues 17–24 (AHIDAGKT), 81–85 (DTPGH), and 135–138 (NKMD).

The protein belongs to the TRAFAC class translation factor GTPase superfamily. Classic translation factor GTPase family. EF-G/EF-2 subfamily.

The protein resides in the cytoplasm. In terms of biological role, catalyzes the GTP-dependent ribosomal translocation step during translation elongation. During this step, the ribosome changes from the pre-translocational (PRE) to the post-translocational (POST) state as the newly formed A-site-bound peptidyl-tRNA and P-site-bound deacylated tRNA move to the P and E sites, respectively. Catalyzes the coordinated movement of the two tRNA molecules, the mRNA and conformational changes in the ribosome. The protein is Elongation factor G of Ehrlichia ruminantium (strain Welgevonden).